Consider the following 330-residue polypeptide: MANRTVKEAKNVHGTNPQYLIEKIIRSRIYDSKYWKEQCFALTAELLVDKAMELRFVGGVYGGNIKPTQFLCLTLKMLQIQPEKDIVVEFIKNEEFKYVRALGAFYLRLTGAALDCYKYLEPLYIDNRKLRRQNRAGQFEIVYMDEYIDELLRNDRVCDIILPRIQKRSILEENNEIEPKVSVLDEDLDDELPSDEEKADETNRPKENSTAVRRPRRVRSKSRSRSRERERRSGQGNSARSRDYYDELEDYDRQRNRVRNRDTHNEDYDRRQNNGRHDRERERQDRDSIRERERDGDRDRRDRERERERDRGRHDQRERDSRGERDRRRY.

Residues 182 to 330 (SVLDEDLDDE…SRGERDRRRY (149 aa)) form a disordered region. Over residues 184 to 199 (LDEDLDDELPSDEEKA) the composition is skewed to acidic residues. Residues 213–224 (RRPRRVRSKSRS) show a composition bias toward basic residues. Positions 240–330 (RSRDYYDELE…SRGERDRRRY (91 aa)) are enriched in basic and acidic residues.

This sequence belongs to the PRP38 family. Component of the spliceosome C complex. Interacts with Mfap1 (via C-terminus). As to expression, detected in all germal and follicle cells.

Its subcellular location is the nucleus. Required for pre-mRNA splicing. This is Pre-mRNA-splicing factor 38 from Drosophila melanogaster (Fruit fly).